Consider the following 406-residue polypeptide: Na(+)/H(+) antiporter NhaA (406 aa).

Transmembrane regions (helical) follow at residues F29–F49, F75–M95, I111–F131, G141–S161, A170–F190, I195–Y215, Q220–I240, G242–N262, Y278–F298, I306–M326, F349–I369, and A382–C402.

It belongs to the NhaA Na(+)/H(+) (TC 2.A.33) antiporter family.

Its subcellular location is the cell inner membrane. The catalysed reaction is Na(+)(in) + 2 H(+)(out) = Na(+)(out) + 2 H(+)(in). Its function is as follows. Na(+)/H(+) antiporter that extrudes sodium in exchange for external protons. The protein is Na(+)/H(+) antiporter NhaA of Rickettsia massiliae (strain Mtu5).